A 374-amino-acid polypeptide reads, in one-letter code: Chaperone protein DnaJ (374 aa).

One can recognise a J domain in the interval asparagine 5–glycine 69. The CR-type zinc finger occupies glycine 137–glutamine 215. Zn(2+) contacts are provided by cysteine 150, cysteine 153, cysteine 167, cysteine 170, cysteine 189, cysteine 192, cysteine 203, and cysteine 206. 4 CXXCXGXG motif repeats span residues cysteine 150–glycine 157, cysteine 167–glycine 174, cysteine 189–glycine 196, and cysteine 203–glycine 210.

It belongs to the DnaJ family. As to quaternary structure, homodimer. It depends on Zn(2+) as a cofactor.

Its subcellular location is the cytoplasm. Functionally, participates actively in the response to hyperosmotic and heat shock by preventing the aggregation of stress-denatured proteins and by disaggregating proteins, also in an autonomous, DnaK-independent fashion. Unfolded proteins bind initially to DnaJ; upon interaction with the DnaJ-bound protein, DnaK hydrolyzes its bound ATP, resulting in the formation of a stable complex. GrpE releases ADP from DnaK; ATP binding to DnaK triggers the release of the substrate protein, thus completing the reaction cycle. Several rounds of ATP-dependent interactions between DnaJ, DnaK and GrpE are required for fully efficient folding. Also involved, together with DnaK and GrpE, in the DNA replication of plasmids through activation of initiation proteins. This chain is Chaperone protein DnaJ, found in Rickettsia massiliae (strain Mtu5).